The primary structure comprises 161 residues: Nucleotide-binding protein Mmwyl1_2033 (161 aa).

The protein belongs to the YajQ family.

In terms of biological role, nucleotide-binding protein. This chain is Nucleotide-binding protein Mmwyl1_2033, found in Marinomonas sp. (strain MWYL1).